We begin with the raw amino-acid sequence, 239 residues long: Mannose-P-dolichol utilization defect 1 protein homolog 1 (239 aa).

6 helical membrane passes run 25 to 45 (CLLP…SMTV), 62 to 82 (LSVV…AYCL), 91 to 111 (FGEL…IYYF), 123 to 143 (AILY…PFLF), 174 to 194 (LSFL…FTSI), and 202 to 222 (MLLG…QILL). The 67-residue stretch at 27-93 (LPLISKLLGY…KDLPFSAFGE (67 aa)) folds into the PQ-loop 1 domain. The region spanning 150–205 (KHLIFLSARIPQIWKNFRNKSTGQLSFLTCLMNFGGALARVFTSIQEKAPLSMLLG) is the PQ-loop 2 domain.

It belongs to the MPDU1 (TC 2.A.43.3) family.

It localises to the membrane. This is Mannose-P-dolichol utilization defect 1 protein homolog 1 from Arabidopsis thaliana (Mouse-ear cress).